A 92-amino-acid chain; its full sequence is Small ribosomal subunit protein uS19 (92 aa).

It belongs to the universal ribosomal protein uS19 family.

Functionally, protein S19 forms a complex with S13 that binds strongly to the 16S ribosomal RNA. The protein is Small ribosomal subunit protein uS19 of Rhodopseudomonas palustris (strain BisA53).